The chain runs to 585 residues: SLAIN motif-containing protein-like (585 aa).

Disordered regions lie at residues 1–34 (MVVPDSGSDIQPADNGDTDKVMSNSEPELDPNLT), 55–125 (NQTL…RVEE), 324–365 (QDYA…EDEC), 402–476 (PRLS…SDGQ), and 492–585 (GSMS…DGCY). Over residues 68 to 83 (GGTNNSNLKAGSNINN) the composition is skewed to polar residues. A compositionally biased stretch (low complexity) spans 327 to 345 (ASTSASRRSSSASLQSLRR). The span at 351-365 (QEFDSYSQEDEEDEC) shows a compositional bias: acidic residues. Composition is skewed to polar residues over residues 425-434 (PNLTPRTSLR), 441-476 (NSRSMEANLQSSGNRTSCLPHSPKGASSSRMRSDGQ), and 549-563 (ASPSSRTRLPQTPRS). Positions 575 to 585 (LTDESWKDGCY) are enriched in basic and acidic residues.

The protein belongs to the SLAIN motif-containing family.

This is SLAIN motif-containing protein-like from Danio rerio (Zebrafish).